Consider the following 395-residue polypeptide: Acetate kinase (395 aa).

A Mg(2+)-binding site is contributed by asparagine 10. Residue lysine 17 participates in ATP binding. Arginine 87 serves as a coordination point for substrate. The active-site Proton donor/acceptor is the aspartate 144. ATP is bound by residues 204–208 (HLGNG), 279–281 (DMR), and 327–331 (GIGEN). Mg(2+) is bound at residue glutamate 381.

This sequence belongs to the acetokinase family. As to quaternary structure, homodimer. Mg(2+) is required as a cofactor. Mn(2+) serves as cofactor.

Its subcellular location is the cytoplasm. It carries out the reaction acetate + ATP = acetyl phosphate + ADP. It participates in metabolic intermediate biosynthesis; acetyl-CoA biosynthesis; acetyl-CoA from acetate: step 1/2. Functionally, catalyzes the formation of acetyl phosphate from acetate and ATP. Can also catalyze the reverse reaction. This Stutzerimonas stutzeri (strain A1501) (Pseudomonas stutzeri) protein is Acetate kinase.